We begin with the raw amino-acid sequence, 166 residues long: Alanine racemase (166 aa).

Y62 functions as the Proton acceptor; specific for L-alanine in the catalytic mechanism. A substrate-binding site is contributed by M110.

Belongs to the alanine racemase family. It depends on pyridoxal 5'-phosphate as a cofactor.

The enzyme catalyses L-alanine = D-alanine. It functions in the pathway amino-acid biosynthesis; D-alanine biosynthesis; D-alanine from L-alanine: step 1/1. Functionally, catalyzes the interconversion of L-alanine and D-alanine. May also act on other amino acids. In Piscirickettsia salmonis, this protein is Alanine racemase (alr).